A 224-amino-acid polypeptide reads, in one-letter code: uncharacterized protein (224 aa).

A disordered region spans residues 203 to 224 (ELKKKKKKKIKKPKEIRNQKNV). A compositionally biased stretch (basic residues) spans 204-214 (LKKKKKKKIKK). A compositionally biased stretch (basic and acidic residues) spans 215–224 (PKEIRNQKNV).

This is an uncharacterized protein from Mycoplasma genitalium (strain ATCC 33530 / DSM 19775 / NCTC 10195 / G37) (Mycoplasmoides genitalium).